The following is a 349-amino-acid chain: SUMO-activating enzyme subunit 1 (349 aa).

M1 carries the post-translational modification N-acetylmethionine. An N-acetylvaline; in SUMO-activating enzyme subunit 1, N-terminally processed modification is found at V2. S15 carries the post-translational modification Phosphoserine. K201 carries the post-translational modification N6-acetyllysine.

Belongs to the ubiquitin-activating E1 family. Heterodimer of SAE1 and UBA2/SAE2. The heterodimer corresponds to the two domains that are encoded on a single polypeptide chain in ubiquitin-activating enzyme E1. Interacts with UBE2I.

It localises to the nucleus. Its pathway is protein modification; protein sumoylation. Its function is as follows. The heterodimer acts as an E1 ligase for SUMO1, SUMO2, SUMO3, and probably SUMO4. It mediates ATP-dependent activation of SUMO proteins followed by formation of a thioester bond between a SUMO protein and a conserved active site cysteine residue on UBA2/SAE2. The sequence is that of SUMO-activating enzyme subunit 1 (Sae1) from Rattus norvegicus (Rat).